The chain runs to 691 residues: MEKTESFCPEVPPQDCGASPRPSLRSLPKNQGSLLQFDRQAPGRISTSPTLRRLRTRGCGTRQDAWQVTTWGSWGAPVGFPCYLSKSLPGSPKDSSHLLSPLRLHSRLTSEPERALNAADSLEPQTRPTDKYLPPELQPVNEGSLHQASLRQQEGHFLPSPTLRHPSPQGEELHPSRFYEHRRSSVVLNLPGLEVFPGDLLVSDGAADYLCHPLLLLNSESKKPRWPFSKRGVGKDKHKHISDLENCLSSVKITSFRGYDFYGLKDKTWDEVLETHHKLPTDQLDLKKQQEAVWELFTSECTYFLDHLLVLKMIFMNTLRYLQTHEYLLDVDLWRLFANLEELTQTSLGFVNSLFGIIKDYVDASEISSSLDFISVLTKYFRGSLCQSHQTYCLNYSAAIFYLESLRQRDDFGIYLKWCEQNEQCRRLHVPELLVAPLQRLTRYPLLLKNIWKRSMDSAEKIMIYSIKEKVEKSIRDLEGKVKWLDNFQKFRYLQEIIVWPPLWDRDKRFFIPECLKHIFKEHMAENILSPTSRHLLYEGKLTLAESTRFLDVYLFLFNDFLLVTKTKCNKKKLGGSDPGLMCPSLTPELQAVIKEGGSCTVLDQPIPLDRLVVKSIEPLHVSVFGLRNAFLIQHENRYRQCIAAFLLQAQTENIKKTWMAQITTAISCFTKSQETKKISLFTLPAESSEI.

Disordered stretches follow at residues 1–48 (MEKT…ISTS) and 109–140 (TSEPERALNAADSLEPQTRPTDKYLPPELQPV). Positions 313 to 488 (MIFMNTLRYL…EGKVKWLDNF (176 aa)) constitute a DH domain. N395 is a glycosylation site (N-linked (GlcNAc...) asparagine). A PH domain is found at 535 to 668 (HLLYEGKLTL…WMAQITTAIS (134 aa)).

The protein is Pleckstrin homology domain-containing family G member 7 of Homo sapiens (Human).